The chain runs to 685 residues: Polyphosphate kinase (685 aa).

Asparagine 45 lines the ATP pocket. The Mg(2+) site is built by arginine 375 and arginine 405. Histidine 435 serves as the catalytic Phosphohistidine intermediate. Residues tyrosine 468, arginine 564, and histidine 592 each coordinate ATP.

It belongs to the polyphosphate kinase 1 (PPK1) family. It depends on Mg(2+) as a cofactor. In terms of processing, an intermediate of this reaction is the autophosphorylated ppk in which a phosphate is covalently linked to a histidine residue through a N-P bond.

It carries out the reaction [phosphate](n) + ATP = [phosphate](n+1) + ADP. Its function is as follows. Catalyzes the reversible transfer of the terminal phosphate of ATP to form a long-chain polyphosphate (polyP). This is Polyphosphate kinase from Neisseria gonorrhoeae (strain ATCC 700825 / FA 1090).